We begin with the raw amino-acid sequence, 96 residues long: Co-chaperonin GroES (96 aa).

This sequence belongs to the GroES chaperonin family. As to quaternary structure, heptamer of 7 subunits arranged in a ring. Interacts with the chaperonin GroEL.

Its subcellular location is the cytoplasm. In terms of biological role, together with the chaperonin GroEL, plays an essential role in assisting protein folding. The GroEL-GroES system forms a nano-cage that allows encapsulation of the non-native substrate proteins and provides a physical environment optimized to promote and accelerate protein folding. GroES binds to the apical surface of the GroEL ring, thereby capping the opening of the GroEL channel. The protein is Co-chaperonin GroES of Herminiimonas arsenicoxydans.